Consider the following 130-residue polypeptide: Histone H2A type 1-B/E (130 aa).

The segment at 1–22 (MSGRGKQGGKARAKAKTRSSRA) is disordered. An N-acetylserine modification is found at serine 2. At serine 2 the chain carries Phosphoserine; by RPS6KA5. Arginine 4 is modified (citrulline; alternate). Residue arginine 4 is modified to Symmetric dimethylarginine; by PRMT5; alternate. An N6-(2-hydroxyisobutyryl)lysine; alternate mark is found at lysine 6 and lysine 10. N6-acetyllysine; alternate is present on lysine 6. The span at 7-19 (QGGKARAKAKTRS) shows a compositional bias: basic residues. 2 positions are modified to N6-(beta-hydroxybutyryl)lysine; alternate: lysine 10 and lysine 14. N6-lactoyllysine; alternate is present on lysine 10. Lysine 10 bears the N6-succinyllysine; alternate mark. Residue lysine 14 forms a Glycyl lysine isopeptide (Lys-Gly) (interchain with G-Cter in ubiquitin); alternate linkage. A Glycyl lysine isopeptide (Lys-Gly) (interchain with G-Cter in ubiquitin) cross-link involves residue lysine 16. Residue lysine 37 is modified to N6-(2-hydroxyisobutyryl)lysine; alternate. The residue at position 37 (lysine 37) is an N6-(beta-hydroxybutyryl)lysine; alternate. N6-crotonyllysine; alternate is present on lysine 37. N6-(2-hydroxyisobutyryl)lysine is present on residues lysine 75 and lysine 76. Lysine 96 carries the N6-(2-hydroxyisobutyryl)lysine; alternate modification. Lysine 96 carries the N6-(beta-hydroxybutyryl)lysine; alternate modification. Lysine 96 bears the N6-succinyllysine; alternate mark. Lysine 96 is modified (N6-glutaryllysine; alternate). Glutamine 105 is modified (N5-methylglutamine). The residue at position 119 (lysine 119) is an N6-(2-hydroxyisobutyryl)lysine; alternate. Position 119 is an N6-(beta-hydroxybutyryl)lysine; alternate (lysine 119). Lysine 119 and lysine 120 each carry N6-crotonyllysine; alternate. Lysine 119 and lysine 120 each carry N6-glutaryllysine; alternate. Lysine 120 participates in a covalent cross-link: Glycyl lysine isopeptide (Lys-Gly) (interchain with G-Cter in ubiquitin); alternate. Threonine 121 carries the post-translational modification Phosphothreonine; by DCAF1. Residue lysine 126 is modified to N6-crotonyllysine; alternate. N6-glutaryllysine; alternate is present on lysine 126.

The protein belongs to the histone H2A family. The nucleosome is a histone octamer containing two molecules each of H2A, H2B, H3 and H4 assembled in one H3-H4 heterotetramer and two H2A-H2B heterodimers. The octamer wraps approximately 147 bp of DNA. Deiminated on Arg-4 in granulocytes upon calcium entry. In terms of processing, monoubiquitination of Lys-120 (H2AK119Ub) by RING1, TRIM37 and RNF2/RING2 complex gives a specific tag for epigenetic transcriptional repression and participates in X chromosome inactivation of female mammals. It is involved in the initiation of both imprinted and random X inactivation. Ubiquitinated H2A is enriched in inactive X chromosome chromatin. Ubiquitination of H2A functions downstream of methylation of 'Lys-27' of histone H3 (H3K27me). H2AK119Ub by RNF2/RING2 can also be induced by ultraviolet and may be involved in DNA repair. Monoubiquitination of Lys-120 (H2AK119Ub) by TRIM37 may promote transformation of cells in a number of breast cancers. Following DNA double-strand breaks (DSBs), it is ubiquitinated through 'Lys-63' linkage of ubiquitin moieties by the E2 ligase UBE2N and the E3 ligases RNF8 and RNF168, leading to the recruitment of repair proteins to sites of DNA damage. Ubiquitination at Lys-14 and Lys-16 (H2AK13Ub and H2AK15Ub, respectively) in response to DNA damage is initiated by RNF168 that mediates monoubiquitination at these 2 sites, and 'Lys-63'-linked ubiquitin are then conjugated to monoubiquitin; RNF8 is able to extend 'Lys-63'-linked ubiquitin chains in vitro. Deubiquitinated by USP51 at Lys-14 and Lys-16 (H2AK13Ub and H2AK15Ub, respectively) after damaged DNA is repaired. H2AK119Ub and ionizing radiation-induced 'Lys-63'-linked ubiquitination (H2AK13Ub and H2AK15Ub) are distinct events. Post-translationally, phosphorylation on Ser-2 (H2AS1ph) is enhanced during mitosis. Phosphorylation on Ser-2 by RPS6KA5/MSK1 directly represses transcription. Acetylation of H3 inhibits Ser-2 phosphorylation by RPS6KA5/MSK1. Phosphorylation at Thr-121 (H2AT120ph) by DCAF1 is present in the regulatory region of many tumor suppresor genes and down-regulates their transcription. Glutamine methylation at Gln-105 (H2AQ104me) by FBL is specifically dedicated to polymerase I. It is present at 35S ribosomal DNA locus and impairs binding of the FACT complex. In terms of processing, symmetric dimethylation on Arg-4 by the PRDM1/PRMT5 complex may play a crucial role in the germ-cell lineage. Post-translationally, crotonylation (Kcr) is specifically present in male germ cells and marks testis-specific genes in post-meiotic cells, including X-linked genes that escape sex chromosome inactivation in haploid cells. Crotonylation marks active promoters and enhancers and confers resistance to transcriptional repressors. It is also associated with post-meiotically activated genes on autosomes. Lactylated in macrophages by EP300/P300 by using lactoyl-CoA directly derived from endogenous or exogenous lactate, leading to stimulates gene transcription.

It localises to the nucleus. Its subcellular location is the chromosome. Core component of nucleosome. Nucleosomes wrap and compact DNA into chromatin, limiting DNA accessibility to the cellular machineries which require DNA as a template. Histones thereby play a central role in transcription regulation, DNA repair, DNA replication and chromosomal stability. DNA accessibility is regulated via a complex set of post-translational modifications of histones, also called histone code, and nucleosome remodeling. The protein is Histone H2A type 1-B/E of Homo sapiens (Human).